A 324-amino-acid chain; its full sequence is Phospho-N-acetylmuramoyl-pentapeptide-transferase (324 aa).

The next 10 helical transmembrane spans lie at 5 to 25 (GLLV…PLFI), 52 to 72 (PTMG…IMAI), 77 to 97 (LGAE…IGFL), 122 to 142 (VIAI…YIMI), 149 to 169 (FELG…GSNA), 176 to 196 (LDGL…IIAV), 201 to 221 (FGVA…LVFN), 227 to 247 (VFMG…VAIL), 253 to 273 (LLVI…IQVI), and 302 to 322 (VVVT…YIGV).

The protein belongs to the glycosyltransferase 4 family. MraY subfamily. It depends on Mg(2+) as a cofactor.

Its subcellular location is the cell membrane. The catalysed reaction is UDP-N-acetyl-alpha-D-muramoyl-L-alanyl-gamma-D-glutamyl-meso-2,6-diaminopimeloyl-D-alanyl-D-alanine + di-trans,octa-cis-undecaprenyl phosphate = di-trans,octa-cis-undecaprenyl diphospho-N-acetyl-alpha-D-muramoyl-L-alanyl-D-glutamyl-meso-2,6-diaminopimeloyl-D-alanyl-D-alanine + UMP. The protein operates within cell wall biogenesis; peptidoglycan biosynthesis. Functionally, catalyzes the initial step of the lipid cycle reactions in the biosynthesis of the cell wall peptidoglycan: transfers peptidoglycan precursor phospho-MurNAc-pentapeptide from UDP-MurNAc-pentapeptide onto the lipid carrier undecaprenyl phosphate, yielding undecaprenyl-pyrophosphoryl-MurNAc-pentapeptide, known as lipid I. The protein is Phospho-N-acetylmuramoyl-pentapeptide-transferase of Bacillus mycoides (strain KBAB4) (Bacillus weihenstephanensis).